A 243-amino-acid chain; its full sequence is Probable phosphatase CLI_3563 (243 aa).

Zn(2+) contacts are provided by histidine 8, histidine 10, histidine 16, histidine 41, glutamate 74, histidine 102, histidine 132, aspartate 192, and histidine 194.

It belongs to the PHP family. It depends on Zn(2+) as a cofactor.

This chain is Probable phosphatase CLI_3563, found in Clostridium botulinum (strain Langeland / NCTC 10281 / Type F).